The sequence spans 663 residues: tRNA (guanine(26)-N(2))-dimethyltransferase (663 aa).

The N-terminal 16 residues, 1-16 (MSLARTILWLSRPLRP), are a transit peptide targeting the mitochondrion. One can recognise a Trm1 methyltransferase domain in the interval 56 to 498 (ATVTEGAAKI…APPEALWDIM (443 aa)). Arg-83 lines the S-adenosyl-L-methionine pocket. Ser-121 carries the phosphoserine modification. Residues Arg-165 and Asp-183 each coordinate S-adenosyl-L-methionine. Cys-347, Cys-350, Cys-383, and Cys-386 together coordinate Zn(2+). The residue at position 516 (Ser-516) is a Phosphoserine. The tract at residues 534–574 (IREDANPSSRQRGLKRFQANPEANWGPRPRARPGGKAASED) is disordered. A Nuclear localization signal motif is present at residues 540–572 (PSSRQRGLKRFQANPEANWGPRPRARPGGKAAS). Residues 599 to 626 (RLKTFPCKRFKEGTCQLGDQCCYSHSPA) form a C3H1-type zinc finger. Phosphoserine is present on Ser-624. The tract at residues 632–663 (GDIPIEECPETTTKISPGPKAAAGGIPGPGVD) is disordered.

It belongs to the class I-like SAM-binding methyltransferase superfamily. Trm1 family.

The protein localises to the mitochondrion. It is found in the nucleus. It localises to the cytoplasm. The catalysed reaction is guanosine(26) in tRNA + 2 S-adenosyl-L-methionine = N(2)-dimethylguanosine(26) in tRNA + 2 S-adenosyl-L-homocysteine + 2 H(+). In terms of biological role, dimethylates a single guanine residue at position 26 of most nuclear- and mitochondrial-encoded tRNAs using S-adenosyl-L-methionine as donor of the methyl groups. tRNA guanine(26)-dimethylation is required for redox homeostasis and ensure proper cellular proliferation and oxidative stress survival. The sequence is that of tRNA (guanine(26)-N(2))-dimethyltransferase from Mus musculus (Mouse).